The following is a 94-amino-acid chain: Translation initiation factor IF-1 (94 aa).

The region spanning Met-1–Lys-72 is the S1-like domain. Residues His-71–Arg-94 are disordered.

Belongs to the IF-1 family. Component of the 30S ribosomal translation pre-initiation complex which assembles on the 30S ribosome in the order IF-2 and IF-3, IF-1 and N-formylmethionyl-tRNA(fMet); mRNA recruitment can occur at any time during PIC assembly.

The protein resides in the cytoplasm. One of the essential components for the initiation of protein synthesis. Stabilizes the binding of IF-2 and IF-3 on the 30S subunit to which N-formylmethionyl-tRNA(fMet) subsequently binds. Helps modulate mRNA selection, yielding the 30S pre-initiation complex (PIC). Upon addition of the 50S ribosomal subunit IF-1, IF-2 and IF-3 are released leaving the mature 70S translation initiation complex. The polypeptide is Translation initiation factor IF-1 (Rhodopseudomonas palustris (strain HaA2)).